The following is a 372-amino-acid chain: Lectin/endochitinase 1 (372 aa).

The first 23 residues, 1–23, serve as a signal peptide directing secretion; that stretch reads MMMRFLSAVVIMSSAMAVGLVSA. Residue Q24 coordinates substrate. At Q24 the chain carries Pyrrolidone carboxylic acid. Chitin-binding type-1 domains are found at residues 24–64 and 69–111; these read QRCG…KCWS and DHRC…RCSS. 4 disulfides stabilise this stretch: C26/C41, C35/C47, C40/C54, and C58/C62. Substrate is bound at residue 42–53; the sequence is SIWGWCGDSEPY. Residue H70 participates in Zn(2+) binding. Cystine bridges form between C72-C87, C81-C93, C86-C100, and C105-C109. Residue H90 coordinates Zn(2+). The interval 113–128 is spacer; sequence VRGPRVALSGNSTANS. A glycan (N-linked (GlcNAc...) asparagine) is linked at N123. Residues 129–372 form a chitinase region; it reads IGNVVVTEPL…FQRIQMRVAA (244 aa).

In terms of assembly, monomer and homodimer. Zinc favors dimerization. Active in the monomeric form but probably inactive in the dimeric form. The interaction with glycans on the mammalian TCR and MHC molecules of the T-cell and antigen-presenting cell, respectively, is inhibited by oligomers of GlcNAc. In terms of processing, proteolytically processed to yield a very small protein (8.5 kDa, 86 AA) containing only the two chitin-binding domains. In terms of tissue distribution, rhizomes and inflorescence with immature seeds.

The catalysed reaction is Random endo-hydrolysis of N-acetyl-beta-D-glucosaminide (1-&gt;4)-beta-linkages in chitin and chitodextrins.. Functions both as a chitinase and as a N-acetyl-D-glucosamine binding lectin. Inhibits the growth of several phytopathogenic chitin-containing fungi. Also possesses insecticidal activity and superantigenic properties. This chain is Lectin/endochitinase 1 (UDA1), found in Urtica dioica (Great nettle).